The sequence spans 98 residues: Cystatin-A (98 aa).

Met1 carries the post-translational modification N-acetylmethionine. Positions 46–50 (QVVAG) match the Secondary area of contact motif.

It belongs to the cystatin family.

Its subcellular location is the cytoplasm. Its function is as follows. This is an intracellular thiol proteinase inhibitor. The polypeptide is Cystatin-A (CSTA) (Bos taurus (Bovine)).